The chain runs to 389 residues: MVSVSEIRNAQRAEGPATTLAIGTANPTNCVEQSTYPDFYFKITNSEHKTELKEKFQRMCDKSMIKRRYMYLTEEILKENPSVCEIMAPSLDAWQDMVVVEVPRLGKEAAVKAIKEWGQPKSKITHLIVCTTSGVDMPGADYQLTKLLGLRPYVKRYMMYQQGCFAGGTVLRLAKDLAENNKGARVLVVCSEVTAVTFRGPSDTHLDSLVGQALFGDGAAALIVGSDPVPEIEKPIFEMVWTAQTIAPDSEGAIDGHLREAGLTFHLLKDVPGIVSKNINKALVEAFEPLGISDYNSIFWIAHPGGPAILDQVEQKLALKPEKMKATREVLSEYGNMSSACVLFILDEMRKKSAQDGLKTTGEGLEWGVLFGFGPGLTIETVVLRSVAI.

Cys-164 is an active-site residue.

It belongs to the thiolase-like superfamily. Chalcone/stilbene synthases family.

The catalysed reaction is (E)-4-coumaroyl-CoA + 3 malonyl-CoA + 3 H(+) = 2',4,4',6'-tetrahydroxychalcone + 3 CO2 + 4 CoA. The protein operates within secondary metabolite biosynthesis; flavonoid biosynthesis. The primary product of this enzyme is 4,2',4',6'-tetrahydroxychalcone (also termed naringenin-chalcone or chalcone) which can under specific conditions spontaneously isomerize into naringenin. The polypeptide is Chalcone synthase 4-2 (CHS4-2) (Medicago sativa (Alfalfa)).